A 32-amino-acid chain; its full sequence is Photosystem II reaction center protein T (32 aa).

The helical transmembrane segment at 3–23 threads the bilayer; sequence ALVYTFLLIGTLMVIFFAVFF.

Belongs to the PsbT family. As to quaternary structure, PSII is composed of 1 copy each of membrane proteins PsbA, PsbB, PsbC, PsbD, PsbE, PsbF, PsbH, PsbI, PsbJ, PsbK, PsbL, PsbM, PsbT, PsbX, PsbY, PsbZ, Psb30/Ycf12, at least 3 peripheral proteins of the oxygen-evolving complex and a large number of cofactors. It forms dimeric complexes.

Its subcellular location is the plastid. The protein localises to the chloroplast thylakoid membrane. Found at the monomer-monomer interface of the photosystem II (PS II) dimer, plays a role in assembly and dimerization of PSII. PSII is a light-driven water plastoquinone oxidoreductase, using light energy to abstract electrons from H(2)O, generating a proton gradient subsequently used for ATP formation. In Thalassiosira pseudonana (Marine diatom), this protein is Photosystem II reaction center protein T.